The following is a 153-amino-acid chain: Sperm surface protein Sp17 (153 aa).

Positions 74–117 (FKVPSGATESKEAPPEKSEPEKETPQEVVKEQETQVSFVEEVST) are disordered. Basic and acidic residues predominate over residues 82–106 (ESKEAPPEKSEPEKETPQEVVKEQE). The region spanning 122-151 (AAAAAVKIQAAFRGHKARKEVKIMKESSIE) is the IQ domain.

As to quaternary structure, homodimer. May interact with ROPN1. As to expression, testis- and sperm-specific.

Its subcellular location is the membrane. Its function is as follows. Sperm surface zona pellucida binding protein. Helps to bind spermatozoa to the zona pellucida with high affinity. Might function in binding zona pellucida and carbohydrates. This chain is Sperm surface protein Sp17 (SPA17), found in Notamacropus eugenii (Tammar wallaby).